We begin with the raw amino-acid sequence, 536 residues long: MWRLLLALLLVSSVCCESELFRDDLRTPETMAYINGLMQRRHQMQQEAQQHIQAIPPAVPLQSPGLVNGLGNQNDPALNRISGTSVKPSNLPAAYSNGYVDLATSDRIANSVLNFANILGQHLANGKTQIYSPLSIVHSLALLLLGAKGRSYEELSTVFDIPDTSRLHEQFGLMLQDLQQPTREAISAGRPLTDWRASSAMRSNRRAQRPGAHEVHLANGLFTQTGYTLNPDYRRVIVEVYASDLQIQDFEGSPATARYNINAYVAQHTKNHIENIIASDIPQTTRMILANALYFKAFWETDFIESATRPDNFYPNGEGTEPVMRVQMMATGGAYPYHEDHELGCKIIGLPYRGNLSTMYIIQPFKSSVRELMALQKRLTADKIESMISRMYRRAALVAFPKMHLTESVNLKTVMQRMGLGGIFSAVQNDLSLIATNEATRTNALGGNSLQNLEAQRRAGTGGARSDLVVDDIVHKVDFTVNEQGTEAAASSVTYLKKSGPDVLFRGDTPFMVLVRHDPTKLVLFYGLINEPPAAA.

The signal sequence occupies residues 1–16; it reads MWRLLLALLLVSSVCC. N355 carries an N-linked (GlcNAc...) asparagine glycan.

It belongs to the serpin family.

The protein resides in the secreted. Functionally, serine protease inhibitor which is required for pupal viability and plays an essential role in regulating the melanization reaction. Inhibits spontaneous melanization and appears to be involved in the melanization immune response to physical wounding in larvae and adults. Acts by negatively regulating the Hayan-phenoloxidase (PPO1) cascade in the hemolymph and possibly the trachea. May function by controlling the initial release of the activated form of PPO1, phenoloxidase (PO) and thus maintains PO availability for processes such as wound response and pigmentation. This Drosophila melanogaster (Fruit fly) protein is Serine protease inhibitor 28Dc.